A 146-amino-acid polypeptide reads, in one-letter code: Spermidine export protein MdtJ (146 aa).

Transmembrane regions (helical) follow at residues 1–21 (MIYW…TLSM), 31–51 (TGMI…AIAV), 54–74 (VALG…ITTF), and 76–96 (VLWF…MLIA).

It belongs to the drug/metabolite transporter (DMT) superfamily. Small multidrug resistance (SMR) (TC 2.A.7.1) family. MdtJ subfamily. In terms of assembly, forms a complex with MdtI.

The protein localises to the cell inner membrane. Catalyzes the excretion of spermidine. In Proteus mirabilis (strain HI4320), this protein is Spermidine export protein MdtJ.